Here is a 177-residue protein sequence, read N- to C-terminus: O-acetyl-ADP-ribose deacetylase (177 aa).

Positions 1–175 (MKTRIHVVQG…LYERLLTQQG (175 aa)) constitute a Macro domain. Substrate contacts are provided by residues 11 to 12 (DI), N25, 33 to 35 (GVD), and 122 to 126 (STGVY). Catalysis depends on D35, which acts as the Proton acceptor.

The protein belongs to the MacroD-type family. YmdB subfamily. As to quaternary structure, homodimer. Interacts with RNase III.

The enzyme catalyses 3''-O-acetyl-ADP-D-ribose + H2O = ADP-D-ribose + acetate + H(+). The catalysed reaction is 2''-O-acetyl-ADP-D-ribose + H2O = ADP-D-ribose + acetate + H(+). Its function is as follows. Deacetylates O-acetyl-ADP ribose to yield ADP-ribose and free acetate. Down-regulates ribonuclease 3 (RNase III) activity. Acts by interacting directly with the region of the ribonuclease that is required for dimerization/activation. The protein is O-acetyl-ADP-ribose deacetylase of Shigella flexneri serotype 5b (strain 8401).